We begin with the raw amino-acid sequence, 161 residues long: Allophycocyanin beta chain (161 aa).

An N4-methylasparagine modification is found at Asn71. Cys81 is a (2R,3E)-phycocyanobilin binding site.

Belongs to the phycobiliprotein family. Heterodimer of an alpha and a beta chain. Post-translationally, contains one covalently linked phycocyanobilin chromophore.

The protein resides in the cellular thylakoid membrane. In terms of biological role, light-harvesting photosynthetic bile pigment-protein from the phycobiliprotein complex. Allophycocyanin has a maximum absorption at approximately 650 nanometers. This chain is Allophycocyanin beta chain (apcB), found in Mastigocladus laminosus (Fischerella sp.).